A 293-amino-acid chain; its full sequence is Probable adenylate kinase 1, chloroplastic (293 aa).

Residues 1–26 constitute a mitochondrion transit peptide; the sequence is MAAVQRLLRASASGGAAAAAAAARRR. Residue 70 to 75 participates in ATP binding; it reads GVGKGT. The NMP stretch occupies residues 90 to 119; that stretch reads ATGDLVRDELASSGPLSVQLAEIVNQGKLV. AMP contacts are provided by residues T91, R96, 117-119, 147-150, and Q154; these read KLV and GFPR. Residues 183–231 form an LID region; it reads GRRICGQCGKNFNLACIDVKGENGLPPIYMAPLLPPNNCMSKLITRADD. ATP-binding positions include R184 and 193–194; that span reads NF. AMP contacts are provided by R228 and R239.

This sequence belongs to the adenylate kinase family.

The protein resides in the mitochondrion. The enzyme catalyses AMP + ATP = 2 ADP. Catalyzes the reversible transfer of the terminal phosphate group between ATP and AMP. Plays an important role in cellular energy homeostasis and in adenine nucleotide metabolism. The polypeptide is Probable adenylate kinase 1, chloroplastic (Oryza sativa subsp. japonica (Rice)).